The primary structure comprises 440 residues: Xylose isomerase (440 aa).

Residues His-100 and Asp-103 contribute to the active site. Positions 231, 267, 270, 295, 306, 308, and 338 each coordinate Mg(2+).

This sequence belongs to the xylose isomerase family. In terms of assembly, homotetramer. The cofactor is Mg(2+).

It is found in the cytoplasm. The catalysed reaction is alpha-D-xylose = alpha-D-xylulofuranose. This Burkholderia vietnamiensis (strain G4 / LMG 22486) (Burkholderia cepacia (strain R1808)) protein is Xylose isomerase.